The following is a 366-amino-acid chain: Sec-independent protein translocase protein TatC (366 aa).

7 helical membrane passes run 42–62 (VLAVLVLFLILFPFRNELFTM), 70–90 (HMPAGSTMIAVEVASPFFIPL), 97–117 (AVFIAIPFLLYQLWAFIAPGL), 134–154 (ILFYLGAAFAYFVVFPVVFGF), 179–199 (LFFAFGFVFEVPVAIVLLVIV), 207–227 (LAGFRRYAILIAFIIAAILTP), and 230–250 (VLSQFMMALPIIMLYEFGLFV). Residues 266–279 (EAEESGAADDESDE) show a composition bias toward acidic residues. The tract at residues 266–366 (EAEESGAADD…PSPKKPDSPV (101 aa)) is disordered. Basic and acidic residues-rich tracts occupy residues 281–290 (VSARHAEYEA) and 301–318 (DMDKAFDEAEADQRRLES). Over residues 319-333 (DSSASDDGPESNTAG) the composition is skewed to polar residues.

It belongs to the TatC family. The Tat system comprises two distinct complexes: a TatABC complex, containing multiple copies of TatA, TatB and TatC subunits, and a separate TatA complex, containing only TatA subunits. Substrates initially bind to the TatABC complex, which probably triggers association of the separate TatA complex to form the active translocon.

Its subcellular location is the cell inner membrane. Its function is as follows. Part of the twin-arginine translocation (Tat) system that transports large folded proteins containing a characteristic twin-arginine motif in their signal peptide across membranes. Together with TatB, TatC is part of a receptor directly interacting with Tat signal peptides. The protein is Sec-independent protein translocase protein TatC of Halothiobacillus neapolitanus (strain ATCC 23641 / c2) (Thiobacillus neapolitanus).